Here is a 398-residue protein sequence, read N- to C-terminus: MNIHEYQAKAVLREFGVPVGHGFPIFKASEAEAAAKQLGGPVWVVKSQIHAGGRGKGKFKEASAGDKGGVRLAKSIDEVKEFAKQMLGATLVTVQTGADGKQVNRLYIEEGSDIDKEFYLSLLVDRATSRISFVVSTEGGMSIEDVAHETPEKIVSFTVDPATGIMGHHGRTVAKALNLKGEQAKQAEAMVAKLYTAFVAKDMDMLEINPLVLTKQGDLKCLDAKISFDGNALYRHTDIQALRDETEEDAKEIEASKYDLNYVTLDGTIGCMVNGAGLAMATMDIIKLYGMSPANFLDVGGGASKEKVTAAFKIITADPNVKGILINIFGGIMKCDVIAEGVVAAVKEVGLDVPLVVRLEGTNVEAGKKIIKHSGLNVLPADNLDDAAQKIVAAVKGA.

Residues 9–254 enclose the ATP-grasp domain; it reads KAVLREFGVP…ETEEDAKEIE (246 aa). ATP is bound by residues lysine 46, 53–55, glutamate 109, serine 112, and glutamate 117; that span reads GRG. Mg(2+)-binding residues include asparagine 209 and aspartate 223. Residues asparagine 274 and 331-333 contribute to the substrate site; that span reads GIM.

Belongs to the succinate/malate CoA ligase beta subunit family. In terms of assembly, heterotetramer of two alpha and two beta subunits. Requires Mg(2+) as cofactor.

The catalysed reaction is succinate + ATP + CoA = succinyl-CoA + ADP + phosphate. It catalyses the reaction GTP + succinate + CoA = succinyl-CoA + GDP + phosphate. The protein operates within carbohydrate metabolism; tricarboxylic acid cycle; succinate from succinyl-CoA (ligase route): step 1/1. In terms of biological role, succinyl-CoA synthetase functions in the citric acid cycle (TCA), coupling the hydrolysis of succinyl-CoA to the synthesis of either ATP or GTP and thus represents the only step of substrate-level phosphorylation in the TCA. The beta subunit provides nucleotide specificity of the enzyme and binds the substrate succinate, while the binding sites for coenzyme A and phosphate are found in the alpha subunit. This is Succinate--CoA ligase [ADP-forming] subunit beta from Rhodopseudomonas palustris (strain ATCC BAA-98 / CGA009).